The following is a 509-amino-acid chain: Maturase K (509 aa).

This sequence belongs to the intron maturase 2 family. MatK subfamily.

It localises to the plastid. In terms of biological role, usually encoded in the trnK tRNA gene intron. Probably assists in splicing its own and other chloroplast group II introns. The sequence is that of Maturase K from Castilleja linariifolia (Wyoming Indian paintbrush).